A 334-amino-acid polypeptide reads, in one-letter code: Putative fatty acid elongase 1 (334 aa).

Topologically, residues 1–51 are lumenal; that stretch reads MDLTGAHMLKIHRPSIDHPFGVDLWHLFEQLSIKTIGWNPSEFEYIPGKTP. The helical transmembrane segment at 52 to 72 threads the bilayer; the sequence is MSQWSSVIVSITAYYVIILSG. Topologically, residues 73 to 86 are cytoplasmic; it reads RAIMTNRKPLKQRR. The chain crosses the membrane as a helical span at residues 87-107; it reads LFQLHNFILTIISGALLALLV. Residues 108–135 lie on the Lumenal side of the membrane; the sequence is EEVFRNYMRNGLFYCVCDSRHFTQRLVT. The helical transmembrane segment at 136-156 threads the bilayer; sequence LYYLNYLTKYLELMDTVFLFL. The Cytoplasmic portion of the chain corresponds to 157–160; the sequence is KKKP. Residues 161-181 traverse the membrane as a helical segment; the sequence is LAFLHCYHHGITALLCFTQLL. The Lumenal segment spans residues 182–187; sequence GRTSVQ. The helical transmembrane segment at 188–208 threads the bilayer; sequence WGVIGLNLYVHVIMYSYYFLA. The Cytoplasmic portion of the chain corresponds to 209 to 224; it reads ACGRRVWWKQWVTRVQ. A helical membrane pass occupies residues 225-245; the sequence is IIQFVLDLILCYFGTYSHIAF. The Lumenal portion of the chain corresponds to 246–260; it reads RYFPWLPHVGDCSGS. Residues 261–281 form a helical membrane-spanning segment; sequence LFAAFFGCGVLSSYLFLFIGF. At 282–334 the chain is on the cytoplasmic side; it reads YINTYIKRGAKKNQRKAAGKADNTSVAAAAGSEALAATTATNASPFSARSRKL. Residue serine 325 is modified to Phosphoserine.

It belongs to the ELO family.

The protein localises to the endoplasmic reticulum membrane. It catalyses the reaction a very-long-chain acyl-CoA + malonyl-CoA + H(+) = a very-long-chain 3-oxoacyl-CoA + CO2 + CoA. In terms of biological role, may be involved in the synthesis of very long chain fatty acids. This chain is Putative fatty acid elongase 1, found in Schizosaccharomyces pombe (strain 972 / ATCC 24843) (Fission yeast).